The following is a 316-amino-acid chain: Membrane protein UL148 (316 aa).

The signal sequence occupies residues 1–20 (MLRLLFTLVLLALYGPSVDA). The chain crosses the membrane as a helical span at residues 286-308 (FIVQYLNTLLITMMAAIWARVLI).

In terms of assembly, interacts with host SEL1L.

Its subcellular location is the host endoplasmic reticulum membrane. Chaperone protein that plays an important role in HCMV tropism. Cooperates with UL116 to regulate the abundance of gH-gL complexes in virion. Favors the incorporation of gL into virions once UL116 has regulated the early folding steps of virion assembly. Interacts with the host ERAD machinery and slows gO decay which would otherwise be constitutively degraded. Reorganizes the host endoplasmic reticulum and activates the unfolded protein response. Additionally, plays a role in the evasion of antiviral immune response by down-regulating cell surface expression of host CD58. Mechanistically, interacts with host CD58 and retains its immature form intracellularly. The capacity to cause endoplasmic reticulum reorganization and the intracellular retention of host CD58 are functionally independent properties. The sequence is that of Membrane protein UL148 (UL148) from Human cytomegalovirus (strain Merlin) (HHV-5).